Here is a 293-residue protein sequence, read N- to C-terminus: Small ribosomal subunit protein uS5 (293 aa).

The tract at residues 1–55 (MADDAGAAGGPGGPGGPGLGGRGGFRGGFGSGLRGRGRGRGRGRGRGRGARGGKA) is disordered. Position 2 is an N-acetylalanine (Ala2). The segment covering 7–34 (AAGGPGGPGGPGLGGRGGFRGGFGSGLR) has biased composition (gly residues). 14 consecutive repeat copies span residues 9 to 11 (GGP), 12 to 14 (GGP), 15 to 17 (GGP), 22 to 25 (RGGF), 26 to 29 (RGGF), 34 to 35 (RG), 36 to 37 (RG), 38 to 39 (RG), 40 to 41 (RG), 42 to 43 (RG), 44 to 45 (RG), 46 to 47 (RG), 48 to 49 (RG), and 51 to 52 (RG). The tract at residues 9–17 (GGPGGPGGP) is 3 X 3 AA tandem repeats of G-G-P. The segment at 22 to 29 (RGGFRGGF) is 2 X 4 AA tandem repeats of R-G-G-F. The 9 X 2 AA tandem repeats of R-G stretch occupies residues 34-52 (RGRGRGRGRGRGRGRGARG). Positions 35-51 (GRGRGRGRGRGRGRGAR) are enriched in basic residues. Glycyl lysine isopeptide (Lys-Gly) (interchain with G-Cter in ubiquitin) cross-links involve residues Lys54 and Lys58. One can recognise an S5 DRBM domain in the interval 102–165 (LKDEVLKIMP…ILAKLSIVPV (64 aa)). Thr252 carries the post-translational modification Phosphothreonine. Lys263 carries the post-translational modification N6-acetyllysine. Ser264 bears the Phosphoserine mark. Thr270 carries the post-translational modification Phosphothreonine. Lys275 is subject to N6-acetyllysine; alternate. Lys275 is covalently cross-linked (Glycyl lysine isopeptide (Lys-Gly) (interchain with G-Cter in SUMO1); alternate). A Glycyl lysine isopeptide (Lys-Gly) (interchain with G-Cter in SUMO2); alternate cross-link involves residue Lys275. Lys275 participates in a covalent cross-link: Glycyl lysine isopeptide (Lys-Gly) (interchain with G-Cter in ubiquitin); alternate. Ser281 carries the phosphoserine modification.

The protein belongs to the universal ribosomal protein uS5 family. Component of the small ribosomal subunit. Interacts with zinc finger protein ZNF277 (via zinc-finger domains); the interaction is direct; the interaction is extra-ribosomal. Interaction with ZNF277 competes with the binding of RPS2 to protein arginine methyltransferase PRMT3. Post-translationally, citrullinated by PADI4 in the Arg/Gly-rich region. In terms of processing, asymmetric arginine dimethylation by PRMT3 occurs at multiple sites in the Arg/Gly-rich region. Monoubiquitinated at Lys-54 and Lys-58 by RNF10 when a ribosome has stalled during translation, leading to its degradation by the proteasome. Deubiquitinated at Lys-54 and Lys-58 by USP10, preventing degradation by the proteasome and promoting 40S ribosome subunit recycling following ribosome dissociation.

It is found in the cytoplasm. Its subcellular location is the nucleus. The protein localises to the nucleolus. Functionally, component of the ribosome, a large ribonucleoprotein complex responsible for the synthesis of proteins in the cell. The small ribosomal subunit (SSU) binds messenger RNAs (mRNAs) and translates the encoded message by selecting cognate aminoacyl-transfer RNA (tRNA) molecules. The large subunit (LSU) contains the ribosomal catalytic site termed the peptidyl transferase center (PTC), which catalyzes the formation of peptide bonds, thereby polymerizing the amino acids delivered by tRNAs into a polypeptide chain. The nascent polypeptides leave the ribosome through a tunnel in the LSU and interact with protein factors that function in enzymatic processing, targeting, and the membrane insertion of nascent chains at the exit of the ribosomal tunnel. Plays a role in the assembly and function of the 40S ribosomal subunit. Mutations in this protein affects the control of translational fidelity. Involved in nucleolar processing of pre-18S ribosomal RNA and ribosome assembly. The chain is Small ribosomal subunit protein uS5 (Rps2) from Rattus norvegicus (Rat).